A 715-amino-acid chain; its full sequence is L-type lectin-domain containing receptor kinase VIII.1 (715 aa).

The signal sequence occupies residues 1–21 (MSLFLSFFISILLCFFNGATT). The tract at residues 22–247 (TQFDFSTLAI…IHSIEWWSFS (226 aa)) is legume-lectin like. Residues 22-317 (TQFDFSTLAI…SRFCKENPGT (296 aa)) are Extracellular-facing. 2 N-linked (GlcNAc...) asparagine glycosylation sites follow: asparagine 126 and asparagine 195. The interval 255–296 (GSGSGSPPPRANLMNPKANSVKSPPPLASQPSSSAIPISSNT) is disordered. Residues 283 to 296 (SQPSSSAIPISSNT) are compositionally biased toward low complexity. The helical transmembrane segment at 318 to 338 (IAGVVTAGAFFLALFAGALFW) threads the bilayer. Residues 339 to 715 (VYSKKFKRVE…IIRSDDDHLV (377 aa)) are Cytoplasmic-facing. One can recognise a Protein kinase domain in the interval 376-676 (FNESRIIGHG…MSFSTSHLLL (301 aa)). ATP contacts are provided by residues 382–390 (IGHGAFGVV) and lysine 405. Aspartate 500 (proton acceptor) is an active-site residue.

In the C-terminal section; belongs to the protein kinase superfamily. Ser/Thr protein kinase family. The protein in the N-terminal section; belongs to the leguminous lectin family.

It localises to the cell membrane. The enzyme catalyses L-seryl-[protein] + ATP = O-phospho-L-seryl-[protein] + ADP + H(+). It carries out the reaction L-threonyl-[protein] + ATP = O-phospho-L-threonyl-[protein] + ADP + H(+). In Arabidopsis thaliana (Mouse-ear cress), this protein is L-type lectin-domain containing receptor kinase VIII.1 (LECRK81).